The chain runs to 391 residues: F-box only protein 5 (391 aa).

The 48-residue stretch at 198–245 (AELFHRDFKHLLTKILRHLSAMDLINVISVSTTWRKILQKDNSAYNSY) folds into the F-box domain. Residues 318-366 (CLKVCVDCSSPAKYDPYLHRATCTRESCKFDFCTLCSCKYHGSKCCQTS) form a ZBR-type zinc finger. The Zn(2+) site is built by Cys322, Cys325, Cys340, Cys345, Cys350, Cys353, His358, and Cys363. Residues 365-391 (TSKPRSYRVPSEPLPGSKKSKQNLRRL) are disordered. The span at 382 to 391 (KKSKQNLRRL) shows a compositional bias: basic residues.

In terms of assembly, part of a SCF (SKP1-cullin-F-box) protein ligase complex. Interacts with btrc. Interacts with skp1. Interacts with cdc20. Interacts with pin1; stabilizes fbxo5 by preventing its association with btrc in an isomerization-dependent pathway; this interaction is present during G2 phase and prevents fbxo5 degradation. Interacts with plk1. Post-translationally, proteolysed; proteolysis is induced by both cyclin B-cdk1 and cyclin A-cdk1/2 complex through probable phosphorylation. Proteolysis is inhibited by pin1 during G2.

It localises to the nucleus. The protein resides in the cytoplasm. It is found in the cytoskeleton. The protein localises to the spindle. Its subcellular location is the microtubule organizing center. It localises to the centrosome. It functions in the pathway protein modification; protein ubiquitination. In terms of biological role, regulates progression through early mitosis by inhibiting the anaphase promoting complex/cyclosome (APC). Binds to the APC activators cdc20 to prevent APC activation. Can also bind directly to the APC to inhibit substrate-binding. Required to arrest unfertilized eggs at metaphase of meiosis II, by preventing their release from metaphase of meiosis II, through inhibition of APC-dependent cyclin B destruction leading to stabilization of cyclin B-cdk1 complex activity. The protein is F-box only protein 5 of Xenopus tropicalis (Western clawed frog).